A 132-amino-acid chain; its full sequence is Protein FasE (132 aa).

The chain is Protein FasE (fasE) from Escherichia coli.